Here is a 367-residue protein sequence, read N- to C-terminus: NADH-quinone oxidoreductase subunit H (367 aa).

The next 8 helical transmembrane spans lie at 19-39 (ALFI…AYLV), 87-107 (ICFL…WAVI), 132-152 (IGVL…IIAG), 178-198 (IGLT…GEIV), 204-224 (MPYW…ISAL), 266-286 (ILIN…PLNI), 291-311 (IIPG…CFIW), and 328-348 (GWKV…SILV).

It belongs to the complex I subunit 1 family. As to quaternary structure, NDH-1 is composed of 14 different subunits. Subunits NuoA, H, J, K, L, M, N constitute the membrane sector of the complex.

Its subcellular location is the cell inner membrane. The catalysed reaction is a quinone + NADH + 5 H(+)(in) = a quinol + NAD(+) + 4 H(+)(out). Functionally, NDH-1 shuttles electrons from NADH, via FMN and iron-sulfur (Fe-S) centers, to quinones in the respiratory chain. The immediate electron acceptor for the enzyme in this species is believed to be ubiquinone. Couples the redox reaction to proton translocation (for every two electrons transferred, four hydrogen ions are translocated across the cytoplasmic membrane), and thus conserves the redox energy in a proton gradient. This subunit may bind ubiquinone. The chain is NADH-quinone oxidoreductase subunit H from Ehrlichia chaffeensis (strain ATCC CRL-10679 / Arkansas).